Consider the following 502-residue polypeptide: Protein krueppel (502 aa).

2 disordered regions span residues 115–164 and 178–202; these read PPQG…KLSV and DMYH…THDG. Low complexity-rich tracts occupy residues 119–136 and 183–198; these read THLH…STPL and SGGP…SPNS. 5 consecutive C2H2-type zinc fingers follow at residues 222–244, 250–272, 278–300, 306–328, and 334–354; these read FTCK…ERTH, FECP…MRLH, YHCS…LRVH, YTCE…MLVH, and FECE…NHKC. Disordered regions lie at residues 399–427 and 445–502; these read NESV…SVDG and RLPP…HQQH. Acidic residues predominate over residues 410–419; it reads EDDGPLDLSE. Phosphoserine occurs at positions 468, 471, and 477. Residues 482-491 are compositionally biased toward acidic residues; it reads DDIDLYDLDD.

Belongs to the krueppel C2H2-type zinc-finger protein family.

Its subcellular location is the nucleus. Its function is as follows. Krueppel is a gap class segmentation protein. It is involved in the segmentation of the embryo and in the differentiation of the Malpighian tubules. This Drosophila melanogaster (Fruit fly) protein is Protein krueppel (Kr).